Here is a 1218-residue protein sequence, read N- to C-terminus: Protein jagged-1 (1218 aa).

Positions 1–33 (MRSPRTRGRPGRPLSLLLALLCALRAKVCGASG) are cleaved as a signal peptide. Topologically, residues 34 to 1067 (QFELEILSMQ…QRRPLKNRTD (1034 aa)) are extracellular. Asparagine 143 carries an N-linked (GlcNAc...) asparagine glycan. In terms of domain architecture, DSL spans 185-229 (VTCDDHYYGFGCNKFCRPRDDFFGHYACDQNGNKTCMEGWMGPDC). Intrachain disulfides connect cysteine 187–cysteine 196 and cysteine 200–cysteine 212. The important for interaction with NOTCH1 stretch occupies residues 199–207 (FCRPRDDFF). N-linked (GlcNAc...) asparagine glycosylation is present at asparagine 217. 40 disulfide bridges follow: cysteine 220-cysteine 229, cysteine 234-cysteine 245, cysteine 238-cysteine 251, cysteine 253-cysteine 262, cysteine 265-cysteine 276, cysteine 271-cysteine 282, cysteine 284-cysteine 293, cysteine 300-cysteine 312, cysteine 306-cysteine 322, cysteine 324-cysteine 333, cysteine 340-cysteine 351, cysteine 345-cysteine 360, cysteine 362-cysteine 371, cysteine 378-cysteine 389, cysteine 383-cysteine 398, cysteine 400-cysteine 409, cysteine 416-cysteine 427, cysteine 421-cysteine 436, cysteine 438-cysteine 447, cysteine 454-cysteine 464, cysteine 458-cysteine 473, cysteine 475-cysteine 484, cysteine 491-cysteine 502, cysteine 496-cysteine 511, cysteine 513-cysteine 522, cysteine 529-cysteine 540, cysteine 534-cysteine 549, cysteine 551-cysteine 560, cysteine 578-cysteine 605, cysteine 599-cysteine 615, cysteine 617-cysteine 626, cysteine 633-cysteine 644, cysteine 638-cysteine 653, cysteine 655-cysteine 664, cysteine 671-cysteine 682, cysteine 676-cysteine 691, cysteine 693-cysteine 702, cysteine 709-cysteine 720, cysteine 714-cysteine 729, and cysteine 731-cysteine 740. The EGF-like 1 domain maps to 230–263 (NKAICRQGCSPKHGSCKLPGDCRCQYGWQGLYCD). The region spanning 264–294 (KCIPHPGCVHGTCNEPWQCLCETNWGGQLCD) is the EGF-like 2; atypical domain. EGF-like domains are found at residues 296–334 (DLNY…PNCE) and 336–372 (AEHA…PTCS). In terms of domain architecture, EGF-like 5; calcium-binding spans 374-410 (NIDDCSPNNCSHGGTCQDLVNGFKCVCPPQWTGKTCQ). A glycan (N-linked (GlcNAc...) asparagine) is linked at asparagine 382. Residues 412–448 (DANECEAKPCVNARSCKNLIASYYCDCLPGWMGQNCD) enclose the EGF-like 6; calcium-binding domain. Positions 450–485 (NINDCLGQCQNDASCRDLVNGYRCICPPGYAGDHCE) constitute an EGF-like 7; calcium-binding domain. Residues 487–523 (DIDECASNPCLNGGHCQNEINRFQCLCPTGFSGNLCQ) form the EGF-like 8; calcium-binding domain. 2 consecutive EGF-like domains span residues 525–561 (DIDY…KNCS) and 586–627 (DTPE…TYCH). N-linked (GlcNAc...) asparagine glycosylation is present at asparagine 559. Residues 629–665 (NINDCESNPCKNGGTCIDGVNSYKCICSDGWEGAHCE) enclose the EGF-like 11; calcium-binding domain. The region spanning 667–703 (NINDCSQNPCHYGGTCRDLVNDFYCDCKNGWKGKTCH) is the EGF-like 12; calcium-binding domain. EGF-like domains are found at residues 705–741 (RDSQ…TTCN) and 744–780 (RNSS…PICT). An N-linked (GlcNAc...) asparagine glycan is attached at asparagine 745. 9 disulfides stabilise this stretch: cysteine 748–cysteine 759, cysteine 753–cysteine 768, cysteine 770–cysteine 779, cysteine 786–cysteine 797, cysteine 791–cysteine 806, cysteine 808–cysteine 817, cysteine 824–cysteine 835, cysteine 829–cysteine 844, and cysteine 846–cysteine 855. Residues 782–818 (NTNDCSPHPCYNSGTCVDGDNWYRCECAPGFAGPDCR) form the EGF-like 15; calcium-binding domain. The region spanning 820–856 (NINECQSSPCAFGATCVDEINGYQCICPPGHSGAKCH) is the EGF-like 16; calcium-binding domain. 4 N-linked (GlcNAc...) asparagine glycosylation sites follow: asparagine 960, asparagine 991, asparagine 1045, and asparagine 1064. A helical transmembrane segment spans residues 1068–1093 (FLVPLLSSVLTVAWVCCLVTAFYWCV). At 1094–1218 (RKRRKPSSHT…QSLNRMEYIV (125 aa)) the chain is on the cytoplasmic side. Positions 1181–1218 (REEKAPSGTPTKHPNWTNKQDNRDLESAQSLNRMEYIV) are disordered. Positions 1188–1199 (GTPTKHPNWTNK) are enriched in polar residues.

Interacts with NOTCH1, NOTCH2 and NOTCH3. Widely expressed in many tissues, with highest expression in brain, heart, muscle and thymus.

The protein resides in the membrane. Its subcellular location is the cell membrane. In terms of biological role, ligand for multiple Notch receptors and involved in the mediation of Notch signaling. May be involved in cell-fate decisions during hematopoiesis. Seems to be involved in early and late stages of mammalian cardiovascular development. Inhibits myoblast differentiation. May regulate fibroblast growth factor-induced angiogenesis. The polypeptide is Protein jagged-1 (Jag1) (Mus musculus (Mouse)).